A 58-amino-acid chain; its full sequence is Large ribosomal subunit protein uL30 (58 aa).

This sequence belongs to the universal ribosomal protein uL30 family. As to quaternary structure, part of the 50S ribosomal subunit.

This is Large ribosomal subunit protein uL30 from Vibrio vulnificus (strain CMCP6).